A 224-amino-acid chain; its full sequence is Pyridoxine/pyridoxamine 5'-phosphate oxidase (224 aa).

Residues 69–74 (RHVLLK), 83–84 (FT), Arg-89, Lys-90, and Gln-112 each bind FMN. Lys-74 lines the substrate pocket. The substrate site is built by Tyr-130, Arg-134, and Ser-138. FMN is bound by residues 148–149 (QS) and Trp-194. A substrate-binding site is contributed by 200 to 202 (RMH). Residue Arg-204 coordinates FMN.

The protein belongs to the pyridoxamine 5'-phosphate oxidase family. Homodimer. FMN serves as cofactor.

The enzyme catalyses pyridoxamine 5'-phosphate + O2 + H2O = pyridoxal 5'-phosphate + H2O2 + NH4(+). The catalysed reaction is pyridoxine 5'-phosphate + O2 = pyridoxal 5'-phosphate + H2O2. It functions in the pathway cofactor metabolism; pyridoxal 5'-phosphate salvage; pyridoxal 5'-phosphate from pyridoxamine 5'-phosphate: step 1/1. The protein operates within cofactor metabolism; pyridoxal 5'-phosphate salvage; pyridoxal 5'-phosphate from pyridoxine 5'-phosphate: step 1/1. Catalyzes the oxidation of either pyridoxine 5'-phosphate (PNP) or pyridoxamine 5'-phosphate (PMP) into pyridoxal 5'-phosphate (PLP). This is Pyridoxine/pyridoxamine 5'-phosphate oxidase from Acidothermus cellulolyticus (strain ATCC 43068 / DSM 8971 / 11B).